A 638-amino-acid polypeptide reads, in one-letter code: tRNA uridine 5-carboxymethylaminomethyl modification enzyme MnmG (638 aa).

FAD-binding positions include 13–18, V125, and S180; that span reads GGGHAG. 273–287 provides a ligand contact to NAD(+); sequence GPRYCPSIEDKIHRF. Residue Q370 coordinates FAD.

It belongs to the MnmG family. Homodimer. Heterotetramer of two MnmE and two MnmG subunits. FAD is required as a cofactor.

The protein localises to the cytoplasm. NAD-binding protein involved in the addition of a carboxymethylaminomethyl (cmnm) group at the wobble position (U34) of certain tRNAs, forming tRNA-cmnm(5)s(2)U34. The polypeptide is tRNA uridine 5-carboxymethylaminomethyl modification enzyme MnmG (Cellvibrio japonicus (strain Ueda107) (Pseudomonas fluorescens subsp. cellulosa)).